The chain runs to 244 residues: Gas vesicle protein F (244 aa).

It belongs to the gas vesicle GvpF/GvpL family. In terms of assembly, binds GvpA.

The protein localises to the gas vesicle. Its function is as follows. A minor component of the gas vesicle, may be involved in preventing GvpA aggregation during gas vesicle nucleation. Gas vesicles (GV) are hollow, gas filled proteinaceous nanostructures. During planktonic growth they allow positioning of the organism at a favorable depth for light or nutrient acquisition. In terms of biological role, cluster expression in E.coli (gvpA1-gvpA2-gvpC-gvpN-gvpJ-gvpK-gvpF-gvpG-gvpV-gvpW) allows cells to float and produces irregularly shaped gas vesicles. This is Gas vesicle protein F from Nostoc sp. (strain PCC 7120 / SAG 25.82 / UTEX 2576).